The primary structure comprises 53 residues: MLRYSVIFLIIAIIAAVFGFGGIAAGAAEIAKILFYLFLVIFLVSLVLGMIRR.

A run of 2 helical transmembrane segments spans residues 6–26 (VIFL…IAAG) and 30–50 (IAKI…VLGM).

Belongs to the UPF0391 family.

It localises to the cell membrane. The polypeptide is UPF0391 membrane protein azo1750 (Azoarcus sp. (strain BH72)).